The primary structure comprises 469 residues: Sulfate adenylyltransferase subunit 1 (469 aa).

A tr-type G domain is found at 22–236 (KDMLRFLTCG…TLENIEIGND (215 aa)). The segment at 31–38 (GSVDDGKS) is G1. GTP is bound at residue 31–38 (GSVDDGKS). The interval 89-93 (GITID) is G2. The G3 stretch occupies residues 110-113 (DTPG). Residues 110–114 (DTPGH) and 165–168 (NKMD) contribute to the GTP site. The G4 stretch occupies residues 165–168 (NKMD). The tract at residues 202–204 (SAL) is G5.

Belongs to the TRAFAC class translation factor GTPase superfamily. Classic translation factor GTPase family. CysN/NodQ subfamily. In terms of assembly, heterodimer composed of CysD, the smaller subunit, and CysN.

The catalysed reaction is sulfate + ATP + H(+) = adenosine 5'-phosphosulfate + diphosphate. It participates in sulfur metabolism; hydrogen sulfide biosynthesis; sulfite from sulfate: step 1/3. With CysD forms the ATP sulfurylase (ATPS) that catalyzes the adenylation of sulfate producing adenosine 5'-phosphosulfate (APS) and diphosphate, the first enzymatic step in sulfur assimilation pathway. APS synthesis involves the formation of a high-energy phosphoric-sulfuric acid anhydride bond driven by GTP hydrolysis by CysN coupled to ATP hydrolysis by CysD. This Pseudoalteromonas atlantica (strain T6c / ATCC BAA-1087) protein is Sulfate adenylyltransferase subunit 1.